The sequence spans 178 residues: Gamma-crystallin S (178 aa).

Ser2 is modified (N-acetylserine). Positions 2–5 (SKAG) are N-terminal arm. Beta/gamma crystallin 'Greek key' domains are found at residues 6–44 (TKIT…RVEG) and 45–87 (GTWA…RAVH). Residues 88-93 (LSSGGQ) are connecting peptide. 2 Beta/gamma crystallin 'Greek key' domains span residues 94–134 (YKLQ…KVLE) and 135–177 (GAWI…RRIV).

This sequence belongs to the beta/gamma-crystallin family. As to quaternary structure, monomer.

Crystallins are the dominant structural components of the vertebrate eye lens. This Bos taurus (Bovine) protein is Gamma-crystallin S (CRYGS).